The chain runs to 139 residues: NADH-quinone oxidoreductase subunit A (139 aa).

3 consecutive transmembrane segments (helical) span residues 16 to 36, 69 to 89, and 94 to 114; these read GLFI…ASLL, LVAM…AWAV, and VGWE…AGLV.

Belongs to the complex I subunit 3 family. In terms of assembly, NDH-1 is composed of 14 different subunits. Subunits NuoA, H, J, K, L, M, N constitute the membrane sector of the complex.

The protein localises to the cell inner membrane. The enzyme catalyses a quinone + NADH + 5 H(+)(in) = a quinol + NAD(+) + 4 H(+)(out). Functionally, NDH-1 shuttles electrons from NADH, via FMN and iron-sulfur (Fe-S) centers, to quinones in the respiratory chain. The immediate electron acceptor for the enzyme in this species is believed to be ubiquinone. Couples the redox reaction to proton translocation (for every two electrons transferred, four hydrogen ions are translocated across the cytoplasmic membrane), and thus conserves the redox energy in a proton gradient. This is NADH-quinone oxidoreductase subunit A from Chromohalobacter salexigens (strain ATCC BAA-138 / DSM 3043 / CIP 106854 / NCIMB 13768 / 1H11).